Reading from the N-terminus, the 307-residue chain is Protein phosphatase EYA (307 aa).

Residues 1 to 15 (MNNDTSKKLGTLVSD) are necessary for optimum phosphatase activity. The active-site Nucleophile is Asp-25. Positions 25, 27, and 253 each coordinate Mg(2+). Asp-27 (proton donor) is an active-site residue.

Belongs to the HAD-like hydrolase superfamily. EYA family. It depends on Mg(2+) as a cofactor.

The enzyme catalyses O-phospho-L-tyrosyl-[protein] + H2O = L-tyrosyl-[protein] + phosphate. Inhibited by EDTA. In terms of biological role, possesses phosphatase activity toward para-nitrophenyl phosphate (pNPP) in vitro. Possesses phosphatase activity toward several phosphotyrosine-containing peptides in vitro, with low peptide substrate specificity. The chain is Protein phosphatase EYA from Arabidopsis thaliana (Mouse-ear cress).